A 248-amino-acid polypeptide reads, in one-letter code: tRNA uridine(34) hydroxylase (248 aa).

The Rhodanese domain maps to 127 to 221 (RGRPLVLLDT…YFEEVGGEGY (95 aa)). C181 functions as the Cysteine persulfide intermediate in the catalytic mechanism.

Belongs to the TrhO family.

The enzyme catalyses uridine(34) in tRNA + AH2 + O2 = 5-hydroxyuridine(34) in tRNA + A + H2O. In terms of biological role, catalyzes oxygen-dependent 5-hydroxyuridine (ho5U) modification at position 34 in tRNAs. This chain is tRNA uridine(34) hydroxylase, found in Xanthomonas euvesicatoria pv. vesicatoria (strain 85-10) (Xanthomonas campestris pv. vesicatoria).